The following is a 232-amino-acid chain: MVDHVHFERELTLLKSDVSKMLFLVSESLNDAIESLETMNETLARKVLESDDMIDELNREIEEKAYQIIARYNPILKQLRYIITILKFSNDLERIGDLSCNIAEKCLFLSEEKIKFEMLKELKDMFGSTLKVVQDAFKAFVEEDVDLAFRLWKFDDVIDEMEKKIRRIVVERIREGNISAELALVYILIARDLERVGDHANNLCEEVIYIETGKNMKEFLRGVESGSEGADS.

Belongs to the PhoU family. Homodimer.

It is found in the cytoplasm. Plays a role in the regulation of phosphate uptake. This is Phosphate-specific transport system accessory protein PhoU homolog 1 (phoU1) from Thermotoga maritima (strain ATCC 43589 / DSM 3109 / JCM 10099 / NBRC 100826 / MSB8).